Reading from the N-terminus, the 632-residue chain is Chaperone protein HtpG (632 aa).

The interval 1 to 339 is a; substrate-binding; sequence MAHETMSFQA…SADLPLNVSR (339 aa). The tract at residues 340–559 is b; the sequence is EILQESRDVK…DNDMSGYLQR (220 aa). Positions 560–632 are c; the sequence is MLKAAGQNAP…TNALLLSRAA (73 aa).

This sequence belongs to the heat shock protein 90 family. As to quaternary structure, homodimer.

It localises to the cytoplasm. Its function is as follows. Molecular chaperone. Has ATPase activity. This Burkholderia cenocepacia (strain HI2424) protein is Chaperone protein HtpG.